Reading from the N-terminus, the 32-residue chain is Photosystem I reaction center subunit XII (32 aa).

The chain crosses the membrane as a helical span at residues 10–27 (VVALVSAFVTGILALRLG).

This sequence belongs to the PsaM family.

The protein localises to the plastid. It localises to the chloroplast thylakoid membrane. The chain is Photosystem I reaction center subunit XII from Staurastrum punctulatum (Green alga).